The sequence spans 39 residues: MQVNPNPNKLPVELNRTSLYLGLLLTFVMGILFSSYFFN.

The helical transmembrane segment at 18-38 threads the bilayer; that stretch reads SLYLGLLLTFVMGILFSSYFF.

Belongs to the PsbL family. As to quaternary structure, PSII is composed of 1 copy each of membrane proteins PsbA, PsbB, PsbC, PsbD, PsbE, PsbF, PsbH, PsbI, PsbJ, PsbK, PsbL, PsbM, PsbT, PsbX, PsbY, Psb30/Ycf12, peripheral proteins PsbO, CyanoQ (PsbQ), PsbU, PsbV and a large number of cofactors. It forms dimeric complexes.

The protein resides in the cellular thylakoid membrane. In terms of biological role, one of the components of the core complex of photosystem II (PSII). PSII is a light-driven water:plastoquinone oxidoreductase that uses light energy to abstract electrons from H(2)O, generating O(2) and a proton gradient subsequently used for ATP formation. It consists of a core antenna complex that captures photons, and an electron transfer chain that converts photonic excitation into a charge separation. This subunit is found at the monomer-monomer interface and is required for correct PSII assembly and/or dimerization. The polypeptide is Photosystem II reaction center protein L (Prochlorococcus marinus (strain MIT 9211)).